The primary structure comprises 140 residues: Translation initiation factor 2 subunit beta (140 aa).

This sequence belongs to the eIF-2-beta/eIF-5 family. In terms of assembly, heterotrimer composed of an alpha, a beta and a gamma chain.

Its function is as follows. eIF-2 functions in the early steps of protein synthesis by forming a ternary complex with GTP and initiator tRNA. This chain is Translation initiation factor 2 subunit beta (eif2b), found in Pyrococcus abyssi (strain GE5 / Orsay).